We begin with the raw amino-acid sequence, 208 residues long: Ypt/Rab-type GTPase ypt71 (208 aa).

Residues Ser-17–Cys-23, Phe-33–Thr-40, Gly-66, Asn-124–Asp-127, and Ser-158–Lys-160 each bind GTP. The Effector region signature appears at Tyr-37–Phe-45. S-geranylgeranyl cysteine attachment occurs at residues Cys-206 and Cys-208. Cys-208 carries the post-translational modification Cysteine methyl ester.

The protein belongs to the small GTPase superfamily. Rab family.

Its subcellular location is the vacuole membrane. With respect to regulation, rab activation is generally mediated by a guanine exchange factor (GEF), while inactivation through hydrolysis of bound GTP is catalyzed by a GTPase activating protein (GAP). Ypt/Rab-type GTPases are key regulators of membrane trafficking and intracellular vesicular transport. They act as molecular switches that convert between GTP-bound and GDP-bound states, and regulate virtually all steps of membrane traffic from the formation of the transport vesicle at the donor membrane to its fusion at the target membrane. In the GDP-bound state, Ypt proteins are predominantly cytosolic, solubilized through the interaction with a GDP dissociation inhibitor (GDI). In the GTP-bound state, the proteins are membrane bound and interact with specific effector proteins that select cargo, promote vesicle movement, or verify the correct site of fusion. Act antagonistically to ypt7 in regulating vacuolar morphology, promoting vacuolar fission. The protein is Ypt/Rab-type GTPase ypt71 (ypt71) of Schizosaccharomyces pombe (strain 972 / ATCC 24843) (Fission yeast).